The sequence spans 211 residues: Redox-sensing transcriptional repressor Rex (211 aa).

The segment at residues 17–56 (KYHRYLEELLRNEVDRISSKELSKKIGFTASQIRQDFNCF) is a DNA-binding region (H-T-H motif). 91-96 (GGGNIG) is an NAD(+) binding site.

Belongs to the transcriptional regulatory Rex family. Homodimer.

It localises to the cytoplasm. Modulates transcription in response to changes in cellular NADH/NAD(+) redox state. The chain is Redox-sensing transcriptional repressor Rex from Clostridium tetani (strain Massachusetts / E88).